Here is a 167-residue protein sequence, read N- to C-terminus: Ureidoglycolate lyase (167 aa).

It belongs to the ureidoglycolate lyase family. In terms of assembly, homodimer. Requires Ni(2+) as cofactor.

It carries out the reaction (S)-ureidoglycolate = urea + glyoxylate. Its pathway is nitrogen metabolism; (S)-allantoin degradation. Its function is as follows. Catalyzes the catabolism of the allantoin degradation intermediate (S)-ureidoglycolate, generating urea and glyoxylate. Involved in the utilization of allantoin as nitrogen source. This Pseudomonas fluorescens (strain SBW25) protein is Ureidoglycolate lyase.